The sequence spans 225 residues: UPF0758 protein XOO0462 (225 aa).

Positions 102–224 (ALSDPPSVGR…PVSLAERGWL (123 aa)) constitute an MPN domain. Zn(2+) is bound by residues histidine 173, histidine 175, and aspartate 186. A JAMM motif motif is present at residues 173–186 (HNHPSGNPEPSEAD).

Belongs to the UPF0758 family.

The chain is UPF0758 protein XOO0462 from Xanthomonas oryzae pv. oryzae (strain MAFF 311018).